The sequence spans 914 residues: Caprin-2 (914 aa).

Disordered regions lie at residues 259–283 (PLPKSDSQEKTETIKPDSQSRPSGL), 298–326 (EFLNRRYMPETDERRRGETASPRNWKEDF), 367–411 (KTVD…LPKD), 439–480 (DGES…SSQR), 495–529 (CLSNGDRSINGSDLELHSEDKPRKQAEGFNSPPLY), 608–631 (HRSFTSAKTSSVTTASTQTPPELN), and 718–747 (GAGTATQRSSAGWSDSSQVSSPDRDGAYPL). The segment covering 264-273 (DSQEKTETIK) has biased composition (basic and acidic residues). Polar residues predominate over residues 274 to 283 (PDSQSRPSGL). A compositionally biased stretch (basic and acidic residues) spans 370-392 (DIVKRSTTDPKEKRQRKKAEQDS). Positions 469 to 480 (KSPSDILPSSQR) are enriched in polar residues. Positions 508 to 520 (LELHSEDKPRKQA) are enriched in basic and acidic residues. Low complexity predominate over residues 610 to 626 (SFTSAKTSSVTTASTQT). Positions 718–738 (GAGTATQRSSAGWSDSSQVSS) are enriched in polar residues. The region spanning 780–914 (LTQLRVAFSA…TFSGFLLYQD (135 aa)) is the C1q domain. The Ca(2+) site is built by aspartate 865 and glutamate 871.

The protein belongs to the caprin family. As to quaternary structure, homotrimer; via C1q domain.

The protein localises to the cytoplasm. It localises to the cell membrane. In terms of biological role, promotes phosphorylation of the Wnt coreceptor LRP6, leading to increased activity of the canonical Wnt signaling pathway. Facilitates constitutive LRP6 phosphorylation by CDK14/CCNY during G2/M stage of the cell cycle, which may potentiate cells for Wnt signaling. May regulate the transport and translation of mRNAs, modulating for instance the expression of proteins involved in synaptic plasticity in neurons. Involved in regulation of growth as erythroblasts shift from a highly proliferative state towards their terminal phase of differentiation. May be involved in apoptosis. This Danio rerio (Zebrafish) protein is Caprin-2.